The chain runs to 889 residues: 97 kDa heat shock protein (889 aa).

Disordered regions lie at residues 504–622 (EDAM…ATTD) and 812–889 (FVCD…MELD). Basic and acidic residues predominate over residues 549–585 (SADKEEQADNGSKETSKDSKDQTSESSKSDKESKDQN). Polar residues predominate over residues 586–597 (SEGSKSDNSSTE). Over residues 869-889 (ASKEGETKPDETKPDVEMELD) the composition is skewed to basic and acidic residues.

This sequence belongs to the heat shock protein 70 family.

In terms of biological role, cell surface recognition protein that binds acrosome-reacted sperm and thereby mediates binding and subsequent fusion of the sperm and egg. This Strongylocentrotus purpuratus (Purple sea urchin) protein is 97 kDa heat shock protein.